The chain runs to 118 residues: Small ribosomal subunit protein bTHXc (118 aa).

A chloroplast-targeting transit peptide spans 1–55; sequence MASLILGAPPRVTVALPSSRLSSSHSETAGVSLSCFTHQFSLSTSSSSSIPLVYC. A disordered region spans residues 61 to 118; that stretch reads KTAKGKRFNHSFGNARPRNKSKGRGPERVPVPPAPPRKDKFENDEKIKIDIDESLFSN. The span at 96-111 shows a compositional bias: basic and acidic residues; the sequence is PRKDKFENDEKIKIDI. S117 is subject to Phosphoserine.

It belongs to the bacterial ribosomal protein bTHX family. In terms of assembly, part of the 30S ribosomal subunit.

Its subcellular location is the plastid. The protein localises to the chloroplast. The protein is Small ribosomal subunit protein bTHXc (RPS31) of Arabidopsis thaliana (Mouse-ear cress).